The sequence spans 412 residues: Motilin receptor (412 aa).

Topologically, residues 1–35 (MGSPWNGSDGPEGAREPPWPALPPCDERRCSPFPL) are extracellular. N-linked (GlcNAc...) asparagine glycosylation is present at Asn6. The chain crosses the membrane as a helical span at residues 36–56 (GALVPVTAVCLCLFVVGVSGN). The Cytoplasmic portion of the chain corresponds to 57 to 74 (VVTVMLIGRYRDMRTTTN). Residues 75 to 94 (LYLGSMAVSDLLILLGLPFD) traverse the membrane as a helical segment. Residues 95 to 112 (LYRLWRSRPWVFGPLLCR) lie on the Extracellular side of the membrane. A disulfide bridge connects residues Cys111 and Cys235. Residues 113–134 (LSLYVGEGCTYATLLHMTALSV) traverse the membrane as a helical segment. Residues 135–157 (ERYLAICRPLRARVLVTRRRVRA) lie on the Cytoplasmic side of the membrane. A helical membrane pass occupies residues 158–178 (LIAVLWAVALLSAGPFLFLVG). The Extracellular portion of the chain corresponds to 179 to 246 (VEQDPGISVV…PSPAQLGALR (68 aa)). Residue Asn192 is glycosylated (N-linked (GlcNAc...) asparagine). Residues 247-270 (VMLWVTTAYFFLPFLCLSILYGLI) form a helical membrane-spanning segment. Residues 271-298 (GRELWSSRRPLRGPAASGRERGHRQTVR) lie on the Cytoplasmic side of the membrane. Residues 299-320 (VLLVVVLAFIICWLPFHVGRII) form a helical membrane-spanning segment. The Extracellular segment spans residues 321–334 (YINTEDSRMMYFSQ). The helical transmembrane segment at 335–358 (YFNIVALQLFYLSASINPILYNLI) threads the bilayer. The Cytoplasmic segment spans residues 359 to 412 (SKKYRAAAFKLLLARKSRPRGFHRSRDTAGEVAGDTGGDTVGYTETSANVKTMG).

The protein belongs to the G-protein coupled receptor 1 family. Expressed only in thyroid, stomach, and bone marrow.

Its subcellular location is the cell membrane. Functionally, receptor for motilin. This is Motilin receptor (MLNR) from Homo sapiens (Human).